A 117-amino-acid chain; its full sequence is Cliotide T9 (117 aa).

The signal sequence occupies residues 1 to 25 (MAYVRLACLAVIFFFAASVMFTVEA). Residues 26-55 (GIPCGESCVFIPCLTTVVGCSCKNKVCYNN) constitute a cross-link (cyclopeptide (Gly-Asn)). 3 cysteine pairs are disulfide-bonded: C29/C45, C33/C47, and C38/C52. The propeptide at 56 to 117 (HVIAAEANSI…YLLKDFLKMP (62 aa)) is removed in mature form.

Post-translationally, contains 3 disulfide bonds. This is a cyclic peptide. In terms of tissue distribution, expressed in seed but not in root, nodule, flower, stem, shoot, leaf and pod (at protein level).

In terms of biological role, probably participates in a plant defense mechanism. This chain is Cliotide T9, found in Clitoria ternatea (Butterfly pea).